Reading from the N-terminus, the 205-residue chain is Small ribosomal subunit protein uS4 (205 aa).

The segment at 1–44 (MSKRHSQKYKIDRRMGENLWGRPKSPVNSRSYGPGQHGQRRKTK) is disordered. The S4 RNA-binding domain occupies 94–173 (SRLDAIVYRC…LPEYIDLDAK (80 aa)).

It belongs to the universal ribosomal protein uS4 family. As to quaternary structure, part of the 30S ribosomal subunit. Contacts protein S5. The interaction surface between S4 and S5 is involved in control of translational fidelity.

Its function is as follows. One of the primary rRNA binding proteins, it binds directly to 16S rRNA where it nucleates assembly of the body of the 30S subunit. In terms of biological role, with S5 and S12 plays an important role in translational accuracy. This is Small ribosomal subunit protein uS4 from Maricaulis maris (strain MCS10) (Caulobacter maris).